The primary structure comprises 239 residues: Probable methylthioribulose-1-phosphate dehydratase (239 aa).

Position 100 (cysteine 100) interacts with substrate. Positions 118 and 120 each coordinate Zn(2+). Glutamate 141 serves as the catalytic Proton donor/acceptor. Histidine 197 is a binding site for Zn(2+).

This sequence belongs to the aldolase class II family. MtnB subfamily. Requires Zn(2+) as cofactor.

The protein resides in the cytoplasm. It carries out the reaction 5-(methylsulfanyl)-D-ribulose 1-phosphate = 5-methylsulfanyl-2,3-dioxopentyl phosphate + H2O. It participates in amino-acid biosynthesis; L-methionine biosynthesis via salvage pathway; L-methionine from S-methyl-5-thio-alpha-D-ribose 1-phosphate: step 2/6. Functionally, catalyzes the dehydration of methylthioribulose-1-phosphate (MTRu-1-P) into 2,3-diketo-5-methylthiopentyl-1-phosphate (DK-MTP-1-P). The protein is Probable methylthioribulose-1-phosphate dehydratase of Leishmania major.